The primary structure comprises 718 residues: DNA ligase (718 aa).

Residues 44–48 (DADYD), 93–94 (SL), and Glu127 each bind NAD(+). Lys129 acts as the N6-AMP-lysine intermediate in catalysis. Arg150, Glu186, Lys302, and Lys326 together coordinate NAD(+). Cys432, Cys435, Cys456, and Cys462 together coordinate Zn(2+). In terms of domain architecture, BRCT spans 640–718 (TAGSPVAGKT…EDQWLALISG (79 aa)).

Belongs to the NAD-dependent DNA ligase family. LigA subfamily. Mg(2+) serves as cofactor. Mn(2+) is required as a cofactor.

The enzyme catalyses NAD(+) + (deoxyribonucleotide)n-3'-hydroxyl + 5'-phospho-(deoxyribonucleotide)m = (deoxyribonucleotide)n+m + AMP + beta-nicotinamide D-nucleotide.. In terms of biological role, DNA ligase that catalyzes the formation of phosphodiester linkages between 5'-phosphoryl and 3'-hydroxyl groups in double-stranded DNA using NAD as a coenzyme and as the energy source for the reaction. It is essential for DNA replication and repair of damaged DNA. This is DNA ligase from Rhizobium johnstonii (strain DSM 114642 / LMG 32736 / 3841) (Rhizobium leguminosarum bv. viciae).